A 197-amino-acid chain; its full sequence is Large ribosomal subunit protein uL22 (197 aa).

The segment at glutamate 118–aspartate 197 is disordered. Residues alanine 149–alanine 165 are compositionally biased toward low complexity. Over residues threonine 172–proline 183 the composition is skewed to basic residues. Positions alanine 184–aspartate 197 are enriched in low complexity.

Belongs to the universal ribosomal protein uL22 family. In terms of assembly, part of the 50S ribosomal subunit.

Its function is as follows. This protein binds specifically to 23S rRNA; its binding is stimulated by other ribosomal proteins, e.g. L4, L17, and L20. It is important during the early stages of 50S assembly. It makes multiple contacts with different domains of the 23S rRNA in the assembled 50S subunit and ribosome. In terms of biological role, the globular domain of the protein is located near the polypeptide exit tunnel on the outside of the subunit, while an extended beta-hairpin is found that lines the wall of the exit tunnel in the center of the 70S ribosome. The polypeptide is Large ribosomal subunit protein uL22 (Mycobacterium bovis (strain ATCC BAA-935 / AF2122/97)).